Consider the following 607-residue polypeptide: Elongation factor 4 (607 aa).

In terms of domain architecture, tr-type G spans 11 to 193 (ENIRNFSIIA…KIVEVVPAPD (183 aa)). GTP is bound by residues 23-28 (DHGKST) and 140-143 (NKID).

The protein belongs to the TRAFAC class translation factor GTPase superfamily. Classic translation factor GTPase family. LepA subfamily.

It localises to the cell membrane. It catalyses the reaction GTP + H2O = GDP + phosphate + H(+). Required for accurate and efficient protein synthesis under certain stress conditions. May act as a fidelity factor of the translation reaction, by catalyzing a one-codon backward translocation of tRNAs on improperly translocated ribosomes. Back-translocation proceeds from a post-translocation (POST) complex to a pre-translocation (PRE) complex, thus giving elongation factor G a second chance to translocate the tRNAs correctly. Binds to ribosomes in a GTP-dependent manner. The sequence is that of Elongation factor 4 from Staphylococcus aureus (strain USA300).